The primary structure comprises 492 residues: Nuclear hormone receptor family member nhr-4 (492 aa).

The segment at residues 47–122 (RLICDVCGDV…VGMNPDSVQN (76 aa)) is a DNA-binding region (nuclear receptor). 2 NR C4-type zinc fingers span residues 50 to 70 (CDVC…CNGC) and 86 to 110 (CRFG…LKKC). Residues 121-143 (QNERDRNAKNGGMGGPMSSPTQS) form a disordered region. Positions 215 to 481 (MDFSIHSAVL…ELIQATHKTT (267 aa)) constitute an NR LBD domain.

This sequence belongs to the nuclear hormone receptor family.

Its subcellular location is the nucleus. In terms of biological role, orphan nuclear receptor. This Caenorhabditis elegans protein is Nuclear hormone receptor family member nhr-4 (nhr-4).